The chain runs to 121 residues: Protransforming growth factor alpha (121 aa).

A signal peptide is located at residue Leu-1. Residues 2 to 16 (ENSTSLLSDPPVAAA) constitute a propeptide, removed in mature form. Residues 2–75 (ENSTSLLSDP…AVVAASQKKQ (74 aa)) lie on the Extracellular side of the membrane. An N-linked (GlcNAc...) asparagine glycan is attached at Asn-3. In terms of domain architecture, EGF-like spans 20–60 (HFNDCPDSHTQFCFHGTCRFLVQEDRPACVCHSGYVGARCE). 3 disulfides stabilise this stretch: Cys-24–Cys-37, Cys-32–Cys-48, and Cys-50–Cys-59. A propeptide spans 67 to 121 (VVAASQKKQAITALVVVSIVALAVLIITCVLIHCCQVRKHCEWCRALICRHEKPS) (removed in mature form). Residues 76-101 (AITALVVVSIVALAVLIITCVLIHCC) traverse the membrane as a helical segment.

In terms of assembly, interacts with the PDZ domains of MAGI3, SDCBP and SNTA1. The interaction with SDCBP, is required for the targeting to the cell surface. In the endoplasmic reticulum, in its immature form (i.e. with a prosegment and lacking full N-glycosylation), interacts with CNIH. In the Golgi apparatus, may form a complex with CNIH and GORASP2. Interacts (via cytoplasmic C-terminal domain) with NKD2. In terms of tissue distribution, hypothalamus.

It localises to the secreted. It is found in the extracellular space. The protein localises to the cell membrane. In terms of biological role, TGF alpha is a mitogenic polypeptide that is able to bind to the EGF receptor/EGFR and to act synergistically with TGF beta to promote anchorage-independent cell proliferation in soft agar. In Macaca mulatta (Rhesus macaque), this protein is Protransforming growth factor alpha (TGFA).